Consider the following 360-residue polypeptide: S-adenosylmethionine:tRNA ribosyltransferase-isomerase (360 aa).

The protein belongs to the QueA family. As to quaternary structure, monomer.

The protein localises to the cytoplasm. The enzyme catalyses 7-aminomethyl-7-carbaguanosine(34) in tRNA + S-adenosyl-L-methionine = epoxyqueuosine(34) in tRNA + adenine + L-methionine + 2 H(+). The protein operates within tRNA modification; tRNA-queuosine biosynthesis. In terms of biological role, transfers and isomerizes the ribose moiety from AdoMet to the 7-aminomethyl group of 7-deazaguanine (preQ1-tRNA) to give epoxyqueuosine (oQ-tRNA). The protein is S-adenosylmethionine:tRNA ribosyltransferase-isomerase of Rhodopseudomonas palustris (strain BisB5).